The sequence spans 133 residues: Small ribosomal subunit protein uS8 (133 aa).

It belongs to the universal ribosomal protein uS8 family. Part of the 30S ribosomal subunit. Contacts proteins S5 and S12.

In terms of biological role, one of the primary rRNA binding proteins, it binds directly to 16S rRNA central domain where it helps coordinate assembly of the platform of the 30S subunit. This is Small ribosomal subunit protein uS8 from Synechococcus elongatus (strain ATCC 33912 / PCC 7942 / FACHB-805) (Anacystis nidulans R2).